The sequence spans 525 residues: Phosphoenolpyruvate carboxykinase (ATP) 1 (525 aa).

Substrate-binding residues include R55, Y190, and K196. ATP-binding positions include K196, H215, and 231-239; that span reads GLSGTGKTT. Mn(2+)-binding residues include K196 and H215. D252 provides a ligand contact to Mn(2+). ATP-binding residues include E280, R317, and T442. A substrate-binding site is contributed by R317.

The protein belongs to the phosphoenolpyruvate carboxykinase (ATP) family. Requires Mn(2+) as cofactor.

It is found in the cytoplasm. The enzyme catalyses oxaloacetate + ATP = phosphoenolpyruvate + ADP + CO2. The protein operates within carbohydrate biosynthesis; gluconeogenesis. In terms of biological role, involved in the gluconeogenesis. Catalyzes the conversion of oxaloacetate (OAA) to phosphoenolpyruvate (PEP) through direct phosphoryl transfer between the nucleoside triphosphate and OAA. This Moorella thermoacetica (strain ATCC 39073 / JCM 9320) protein is Phosphoenolpyruvate carboxykinase (ATP) 1.